The sequence spans 446 residues: Trigger factor (446 aa).

Residues 161 to 246 (GDRLTIDFKG…VSKVERSELP (86 aa)) form the PPIase FKBP-type domain. The interval 422–446 (VSYEDAVKPRTAPAEQAEDGEQSAE) is disordered. Acidic residues predominate over residues 437-446 (QAEDGEQSAE).

Belongs to the FKBP-type PPIase family. Tig subfamily.

It is found in the cytoplasm. It carries out the reaction [protein]-peptidylproline (omega=180) = [protein]-peptidylproline (omega=0). Involved in protein export. Acts as a chaperone by maintaining the newly synthesized protein in an open conformation. Functions as a peptidyl-prolyl cis-trans isomerase. This Hahella chejuensis (strain KCTC 2396) protein is Trigger factor.